We begin with the raw amino-acid sequence, 855 residues long: Mitofusin FZO1 (855 aa).

A compositionally biased stretch (basic and acidic residues) spans 1 to 19 (MSEGKQQFKDSNKPHKDST). A disordered region spans residues 1 to 27 (MSEGKQQFKDSNKPHKDSTDQDDDAAT). Residues 1-705 (MSEGKQQFKD…PSLLFTSKIP (705 aa)) lie on the Cytoplasmic side of the membrane. Positions 91–190 (NYNNNRVLLK…KRVDDVSSKV (100 aa)) are HRN. Residues 184–467 (DDVSSKVFIT…KKRSLSKLLP (284 aa)) form the Dynamin-type G domain. GTP is bound by residues 197–202 (NTGKSA) and 370–373 (KKFD). Lys398 participates in a covalent cross-link: Glycyl lysine isopeptide (Lys-Gly) (interchain with G-Cter in ubiquitin). Residue Ser408 participates in GTP binding. Residues 413–433 (ELPHYHNENDNEDHGDRKPDD) show a composition bias toward basic and acidic residues. The disordered stretch occupies residues 413–447 (ELPHYHNENDNEDHGDRKPDDDPYSSSDPDPDFDS). Lys464 is covalently cross-linked (Glycyl lysine isopeptide (Lys-Gly) (interchain with G-Cter in ubiquitin)). An HR1 region spans residues 484 to 547 (KSNMKMYSEE…KEALLNALDV (64 aa)). Residues 630 to 843 (GKRLKVSLSI…QSLYEGTVAQ (214 aa)) form a required for interaction with UGO1 region. Residues 706–726 (TLTLYFLGSTKVVGNIILNGI) traverse the membrane as a helical segment. Residues 727 to 736 (KLSSWSSLKK) are Mitochondrial intermembrane-facing. Residues 737-757 (LSVPVIVVGSLLGLTYLIHDL) traverse the membrane as a helical segment. Residues 758-855 (PRALPMNLSI…MVEEINLDID (98 aa)) lie on the Cytoplasmic side of the membrane. An HR2 region spans residues 769-831 (YKRKLQELDY…KKESNLLSIK (63 aa)). Positions 798–825 (TREILRSCEIIMDKKQITKKELENKKES) form a coiled coil.

This sequence belongs to the TRAFAC class dynamin-like GTPase superfamily. Dynamin/Fzo/YdjA family. Mitofusin subfamily. Homodimer. Dimerization depends on GTP binding. Component of a large multiprotein complex of 800 kDa. Binds the cytoplasmic domain of UGO1 which binds MGM1 through its intermembrane space domain. Interacts with MDM30. Interacts with UBP2 and UBP12. Interacts (when ubiquitinated) with DOA1; the interaction recruits FZO1 to CDC48 and promotes FZO1 proteasomal degradation. In terms of processing, ubiquitinated at Lys-398 and Lys-464. MDM30 and UGO1 are involved in ubiquitination. Deubiquitinated by UBP2 and UBP12. UBP2 and UBP12 recognize distinct ubiquitin chains on FZO1 that have opposing effects on mitochondrial fusion. UBP2 removes ubiquitin chains that initiate proteolysis of FZO1 and inhibit fusion. UBP12 recognizes ubiquitin chains that stabilize FZO1 and promote mitochondrial fusion. UBP12 deubiquitylates FZO1 only after oligomerization.

It localises to the mitochondrion outer membrane. The catalysed reaction is GTP + H2O = GDP + phosphate + H(+). Its function is as follows. Essential transmembrane GTPase, which mediates mitochondrial fusion. Fusion proceeds through several steps; first mitochondria are tethered together, then brought into close contact, followed by the formation of a docking ring around contact areas, and finally membrane fusion. Fusion of mitochondria occurs in many cell types and constitutes an important step in mitochondrial morphology, which is balanced between fusion and fission, mediated by FZO1 and DNM1, respectively. Functions antagonistically with DNM1. Probably acts by forming membrane contact sites that mediate mitochondrial membrane fusion. Mitochondrial docking and fusion requires GTP hydrolysis. Mitochondrial fusion also promotes increased lifespan. This chain is Mitofusin FZO1 (FZO1), found in Saccharomyces cerevisiae (strain ATCC 204508 / S288c) (Baker's yeast).